Consider the following 151-residue polypeptide: 6,7-dimethyl-8-ribityllumazine synthase (151 aa).

Residues Phe23, 55–57, and 79–81 each bind 5-amino-6-(D-ribitylamino)uracil; these read AYE and AVI. (2S)-2-hydroxy-3-oxobutyl phosphate is bound at residue 84–85; the sequence is AT. The active-site Proton donor is the His87. Phe111 is a binding site for 5-amino-6-(D-ribitylamino)uracil. Residue Arg125 participates in (2S)-2-hydroxy-3-oxobutyl phosphate binding.

It belongs to the DMRL synthase family.

It catalyses the reaction (2S)-2-hydroxy-3-oxobutyl phosphate + 5-amino-6-(D-ribitylamino)uracil = 6,7-dimethyl-8-(1-D-ribityl)lumazine + phosphate + 2 H2O + H(+). It participates in cofactor biosynthesis; riboflavin biosynthesis; riboflavin from 2-hydroxy-3-oxobutyl phosphate and 5-amino-6-(D-ribitylamino)uracil: step 1/2. Catalyzes the formation of 6,7-dimethyl-8-ribityllumazine by condensation of 5-amino-6-(D-ribitylamino)uracil with 3,4-dihydroxy-2-butanone 4-phosphate. This is the penultimate step in the biosynthesis of riboflavin. This is 6,7-dimethyl-8-ribityllumazine synthase from Leptospira interrogans serogroup Icterohaemorrhagiae serovar Lai (strain 56601).